The sequence spans 380 residues: Lipid-A-disaccharide synthase (380 aa).

Belongs to the LpxB family.

It catalyses the reaction a lipid X + a UDP-2-N,3-O-bis[(3R)-3-hydroxyacyl]-alpha-D-glucosamine = a lipid A disaccharide + UDP + H(+). It participates in bacterial outer membrane biogenesis; LPS lipid A biosynthesis. Condensation of UDP-2,3-diacylglucosamine and 2,3-diacylglucosamine-1-phosphate to form lipid A disaccharide, a precursor of lipid A, a phosphorylated glycolipid that anchors the lipopolysaccharide to the outer membrane of the cell. This chain is Lipid-A-disaccharide synthase, found in Francisella tularensis subsp. novicida (strain U112).